We begin with the raw amino-acid sequence, 342 residues long: S-adenosylmethionine:tRNA ribosyltransferase-isomerase (342 aa).

Belongs to the QueA family. In terms of assembly, monomer.

It is found in the cytoplasm. The catalysed reaction is 7-aminomethyl-7-carbaguanosine(34) in tRNA + S-adenosyl-L-methionine = epoxyqueuosine(34) in tRNA + adenine + L-methionine + 2 H(+). Its pathway is tRNA modification; tRNA-queuosine biosynthesis. In terms of biological role, transfers and isomerizes the ribose moiety from AdoMet to the 7-aminomethyl group of 7-deazaguanine (preQ1-tRNA) to give epoxyqueuosine (oQ-tRNA). The polypeptide is S-adenosylmethionine:tRNA ribosyltransferase-isomerase (Streptococcus pyogenes serotype M12 (strain MGAS2096)).